We begin with the raw amino-acid sequence, 235 residues long: Fibrillarin-like rRNA/tRNA 2'-O-methyltransferase (235 aa).

Residues 91-92 (TT), 110-111 (EF), 137-138 (DA), and 157-160 (DVAQ) each bind S-adenosyl-L-methionine.

It belongs to the methyltransferase superfamily. Fibrillarin family. As to quaternary structure, interacts with nop5. Component of box C/D small ribonucleoprotein (sRNP) particles that contain rpl7ae, FlpA and nop5, plus a guide RNA.

Involved in pre-rRNA and tRNA processing. Utilizes the methyl donor S-adenosyl-L-methionine to catalyze the site-specific 2'-hydroxyl methylation of ribose moieties in rRNA and tRNA. Site specificity is provided by a guide RNA that base pairs with the substrate. Methylation occurs at a characteristic distance from the sequence involved in base pairing with the guide RNA. The sequence is that of Fibrillarin-like rRNA/tRNA 2'-O-methyltransferase from Pyrobaculum neutrophilum (strain DSM 2338 / JCM 9278 / NBRC 100436 / V24Sta) (Thermoproteus neutrophilus).